The primary structure comprises 81 residues: MKIKDAINRVRWKYKEKIDDYVIVIKDKLTETGLKEIPFTDIYTVDNNYLYLKGEDTIIPLHRVLMIRRKSDDALIWKRGD.

The protein belongs to the UPF0248 family.

The chain is UPF0248 protein SSO2687 from Saccharolobus solfataricus (strain ATCC 35092 / DSM 1617 / JCM 11322 / P2) (Sulfolobus solfataricus).